A 1522-amino-acid polypeptide reads, in one-letter code: Adhesion G protein-coupled receptor B3 (1522 aa).

Residues 1–25 (MKAVRNLLIYIFSTYLLVMFGFNAA) form the signal peptide. Residues 26 to 880 (QDFWCSTLVK…MESSGTPSVT (855 aa)) lie on the Extracellular side of the membrane. Residues 30–159 (CSTLVKGVIY…KSFFEFLVLN (130 aa)) form the CUB domain. Asn-51, Asn-54, Asn-82, Asn-105, and Asn-241 each carry an N-linked (GlcNAc...) asparagine glycan. 4 TSP type-1 domains span residues 291-343 (ESGV…ALCP), 345-398 (HGVW…ALCP), 400-453 (DGQW…PECT), and 455-508 (NGQW…QRCP). 14 disulfides stabilise this stretch: Cys-303–Cys-336, Cys-307–Cys-342, Cys-318–Cys-326, Cys-357–Cys-392, Cys-361–Cys-397, Cys-372–Cys-382, Cys-412–Cys-447, Cys-416–Cys-452, Cys-427–Cys-437, Cys-467–Cys-502, Cys-471–Cys-507, Cys-482–Cys-492, Cys-514–Cys-549, and Cys-537–Cys-567. Asn-337 carries N-linked (GlcNAc...) asparagine glycosylation. Asn-418 carries an N-linked (GlcNAc...) asparagine glycan. An N-linked (GlcNAc...) asparagine glycan is attached at Asn-540. Position 619 is a phosphoserine (Ser-619). 4 N-linked (GlcNAc...) asparagine glycosylation sites follow: Asn-625, Asn-779, Asn-812, and Asn-828. A GAIN-B domain is found at 693–869 (QNSYLMTGNV…AILAQQPREI (177 aa)). Disulfide bonds link Cys-819-Cys-851 and Cys-839-Cys-853. Residues 819 to 869 (CVLWDDSKSNESLGTWSTQGCKTVLTDASHTKCLCDRLSTFAILAQQPREI) form a GPS region. Residues 881–901 (LIVGSGLSCLALITLAVVYAA) traverse the membrane as a helical segment. The Cytoplasmic segment spans residues 902-910 (LWRYIRSER). The chain crosses the membrane as a helical span at residues 911–931 (SIILINFCLSIISSNILILVG). Residues 932-939 (QTQTHNKS) are Extracellular-facing. N-linked (GlcNAc...) asparagine glycosylation is present at Asn-937. The helical transmembrane segment at 940–960 (ICTTTTAFLHFFFLASFCWVL) threads the bilayer. Topologically, residues 961 to 981 (TEAWQSYMAVTGKIRTRLIRK) are cytoplasmic. A helical membrane pass occupies residues 982 to 1002 (RFLCLGWGLPALVVATSVGFT). The Extracellular segment spans residues 1003-1023 (RTKGYGTDHYCWLSLEGGLLY). A helical transmembrane segment spans residues 1024–1044 (AFVGPAAAVVLVNMVIGILVF). Residues 1045 to 1098 (NKLVSRDGILDKKLKHRAGQMSEPHSGLTLKCAKCGVVSTTALSATTASNAMAS) lie on the Cytoplasmic side of the membrane. Residues 1099 to 1119 (LWSSCVVLPLLALTWMSAVLA) traverse the membrane as a helical segment. At 1120–1125 (MTDKRS) the chain is on the extracellular side. The chain crosses the membrane as a helical span at residues 1126-1146 (ILFQILFAVFDSLQGFVIVMV). Residues 1147-1522 (HCILRREVQD…VQEGDFQTEV (376 aa)) lie on the Cytoplasmic side of the membrane. Phosphoserine occurs at positions 1220 and 1411.

It belongs to the G-protein coupled receptor 2 family. Adhesion G-protein coupled receptor (ADGR) subfamily. As to quaternary structure, forms a heterodimer, consisting of a large extracellular region non-covalently linked to a seven-transmembrane moiety. Interacts (via its TSRs) with C1QL1, C1QL2, C1QL3 and C1QL4. Interacts via (C-terminus) with ELMO1, ELMO2 and ELMO3. Post-translationally, the endogenous protein is proteolytically cleaved into 2 subunits, an extracellular subunit and a seven-transmembrane subunit. In terms of tissue distribution, brain-specific expression.

The protein resides in the cell membrane. Its function is as follows. Receptor that plays a role in the regulation of synaptogenesis and dendritic spine formation at least partly via interaction with ELMO1 and RAC1 activity. Promotes myoblast fusion through ELMO/DOCK1. The protein is Adhesion G protein-coupled receptor B3 (Adgrb3) of Mus musculus (Mouse).